A 418-amino-acid chain; its full sequence is Protein-lysine N-trimethyltransferase SMYD5 (418 aa).

The 332-residue stretch at 21 to 352 (VSVEVRFVSS…PGEEICISYL (332 aa)) folds into the SET domain. The MYND-type zinc-finger motif lies at 98 to 136 (PELCTVRKDLHQNCPHCQVMYCSAECRLAATEQYHQVLC). Y351 provides a ligand contact to S-adenosyl-L-methionine. The tract at residues 385 to 418 (ADEPNVTSEEEEEEEEEEEGEPEDAELGDEMTDV) is disordered.

This sequence belongs to the class V-like SAM-binding methyltransferase superfamily. In terms of assembly, interacts with the N-CoR complex. Interacts with EHMT2 and CBX5. In terms of processing, ubiquitinated and degradaed by the proteasome in response to mild hypothermia (32 degrees Celsius), relieving repression of the SP1 gene.

Its subcellular location is the cytoplasm. It catalyses the reaction L-lysyl-[protein] + 3 S-adenosyl-L-methionine = N(6),N(6),N(6)-trimethyl-L-lysyl-[protein] + 3 S-adenosyl-L-homocysteine + 3 H(+). The enzyme catalyses L-lysyl(20)-[histone H4] + 3 S-adenosyl-L-methionine = N(6),N(6),N(6)-trimethyl-L-lysyl(20)-[histone H4] + 3 S-adenosyl-L-homocysteine + 3 H(+). The catalysed reaction is L-lysyl(36)-[histone H3] + 3 S-adenosyl-L-methionine = N(6),N(6),N(6)-trimethyl-L-lysyl(36)-[histone H3] + 3 S-adenosyl-L-homocysteine + 3 H(+). In terms of biological role, protein-lysine N-trimethyltransferase that specifically catalyzes trimethylation of 'Lys-22' of the RPL40/eL40 subunit of the 60S ribosome, thereby promoting translation elongation and protein synthesis. May also act as a histone methyltransferase in the context of histone octamers, but not on nucleosome substrates: trimethylates 'Lys-36' of histone H3 and 'Lys-20' of histone H4 to form H3K36me3 and H4K20me3, respectively. The histone methyltransferase activity, which is independent of its SET domain, is however unsure in vivo. In association with the NCoR corepressor complex, involved in the repression of toll-like receptor 4 (TLR4)-target inflammatory genes in macrophages, possibly by catalyzing the formation of H4K20me3 at the gene promoters. Plays an important role in embryonic stem (ES) cell self-renewal and differentiation. Maintains genome stability of ES cells during differentiation through regulation of heterochromatin formation and repression of endogenous repetitive DNA elements by promoting H4K20me3 marks. Acts as a regulator of the hypothermia response: its degradation in response to mild hypothermia relieves the formation of H3K36me3 at gene promoters, allowing expression of the neuroprotective gene SP1. This is Protein-lysine N-trimethyltransferase SMYD5 from Homo sapiens (Human).